The sequence spans 530 residues: Tyrosinase (530 aa).

An N-terminal signal peptide occupies residues 1 to 17; the sequence is MLLAALYCLLWSFRTSA. The Lumenal, melanosome segment spans residues 19-473; sequence HFPRACASSK…IKPYLEQAQR (455 aa). Asparagine 86 carries N-linked (GlcNAc...) asparagine glycosylation. Histidine 180, histidine 202, and histidine 211 together coordinate Cu cation. N-linked (GlcNAc...) asparagine glycosylation is found at asparagine 230, asparagine 290, and asparagine 337. Residues histidine 363 and histidine 367 each contribute to the Cu cation site. The N-linked (GlcNAc...) asparagine glycan is linked to asparagine 371. Position 390 (histidine 390) interacts with Cu cation. Residues 474-494 form a helical membrane-spanning segment; sequence IWPWLIGAAVVGSVLTAVLGG. Residues 495–530 lie on the Cytoplasmic side of the membrane; it reads LTSLLCRRKRNQLPEEKQPLLMEKEDYHNLMYQSHL.

The protein belongs to the tyrosinase family. In terms of assembly, forms an OPN3-dependent complex with DCT in response to blue light in melanocytes. Requires Cu(2+) as cofactor. Post-translationally, glycosylated.

The protein localises to the melanosome membrane. It is found in the melanosome. It catalyses the reaction 2 L-dopa + O2 = 2 L-dopaquinone + 2 H2O. The enzyme catalyses L-tyrosine + O2 = L-dopaquinone + H2O. It carries out the reaction 2 5,6-dihydroxyindole-2-carboxylate + O2 = 2 indole-5,6-quinone-2-carboxylate + 2 H2O. Its function is as follows. This is a copper-containing oxidase that functions in the formation of pigments such as melanins and other polyphenolic compounds. Catalyzes the initial and rate limiting step in the cascade of reactions leading to melanin production from tyrosine. In addition to hydroxylating tyrosine to DOPA (3,4-dihydroxyphenylalanine), also catalyzes the oxidation of DOPA to DOPA-quinone, and possibly the oxidation of DHI (5,6-dihydroxyindole) to indole-5,6 quinone. This Bos taurus (Bovine) protein is Tyrosinase (TYR).